A 206-amino-acid chain; its full sequence is Protein Ta0236 (206 aa).

An AMMECR1 domain is found at 16–205 (DIGTKAVRLA…EKDPEGVVEK (190 aa)).

This Thermoplasma acidophilum (strain ATCC 25905 / DSM 1728 / JCM 9062 / NBRC 15155 / AMRC-C165) protein is Protein Ta0236.